Here is a 591-residue protein sequence, read N- to C-terminus: Formate--tetrahydrofolate ligase (591 aa).

74–81 provides a ligand contact to ATP; the sequence is TPLGEGKS.

This sequence belongs to the formate--tetrahydrofolate ligase family.

The catalysed reaction is (6S)-5,6,7,8-tetrahydrofolate + formate + ATP = (6R)-10-formyltetrahydrofolate + ADP + phosphate. Its pathway is one-carbon metabolism; tetrahydrofolate interconversion. This chain is Formate--tetrahydrofolate ligase, found in Desulfovibrio desulfuricans (strain ATCC 27774 / DSM 6949 / MB).